The primary structure comprises 404 residues: Tryptophan synthase beta chain (404 aa).

Residue K94 is modified to N6-(pyridoxal phosphate)lysine.

The protein belongs to the TrpB family. Tetramer of two alpha and two beta chains. Pyridoxal 5'-phosphate is required as a cofactor.

It carries out the reaction (1S,2R)-1-C-(indol-3-yl)glycerol 3-phosphate + L-serine = D-glyceraldehyde 3-phosphate + L-tryptophan + H2O. Its pathway is amino-acid biosynthesis; L-tryptophan biosynthesis; L-tryptophan from chorismate: step 5/5. The beta subunit is responsible for the synthesis of L-tryptophan from indole and L-serine. The sequence is that of Tryptophan synthase beta chain from Staphylococcus aureus (strain MRSA252).